Reading from the N-terminus, the 387-residue chain is Succinate--CoA ligase [ADP-forming] subunit beta (387 aa).

In terms of domain architecture, ATP-grasp spans 9 to 244 (KQLFASYGLP…VSQEDDRENR (236 aa)). ATP-binding positions include Lys46, 53–55 (GRG), Glu99, Cys102, and Glu107. Mg(2+) contacts are provided by Asn199 and Asp213. Substrate-binding positions include Asn264 and 321–323 (GIV).

It belongs to the succinate/malate CoA ligase beta subunit family. As to quaternary structure, heterotetramer of two alpha and two beta subunits. It depends on Mg(2+) as a cofactor.

The enzyme catalyses succinate + ATP + CoA = succinyl-CoA + ADP + phosphate. It catalyses the reaction GTP + succinate + CoA = succinyl-CoA + GDP + phosphate. It participates in carbohydrate metabolism; tricarboxylic acid cycle; succinate from succinyl-CoA (ligase route): step 1/1. Functionally, succinyl-CoA synthetase functions in the citric acid cycle (TCA), coupling the hydrolysis of succinyl-CoA to the synthesis of either ATP or GTP and thus represents the only step of substrate-level phosphorylation in the TCA. The beta subunit provides nucleotide specificity of the enzyme and binds the substrate succinate, while the binding sites for coenzyme A and phosphate are found in the alpha subunit. The polypeptide is Succinate--CoA ligase [ADP-forming] subunit beta (Legionella pneumophila (strain Paris)).